Reading from the N-terminus, the 175-residue chain is 3-hydroxydecanoyl-[acyl-carrier-protein] dehydratase (175 aa).

Residue H71 is part of the active site.

Belongs to the thioester dehydratase family. FabA subfamily. As to quaternary structure, homodimer.

It localises to the cytoplasm. The enzyme catalyses a (3R)-hydroxyacyl-[ACP] = a (2E)-enoyl-[ACP] + H2O. It catalyses the reaction (3R)-hydroxydecanoyl-[ACP] = (2E)-decenoyl-[ACP] + H2O. It carries out the reaction (2E)-decenoyl-[ACP] = (3Z)-decenoyl-[ACP]. It participates in lipid metabolism; fatty acid biosynthesis. In terms of biological role, necessary for the introduction of cis unsaturation into fatty acids. Catalyzes the dehydration of (3R)-3-hydroxydecanoyl-ACP to E-(2)-decenoyl-ACP and then its isomerization to Z-(3)-decenoyl-ACP. Can catalyze the dehydratase reaction for beta-hydroxyacyl-ACPs with saturated chain lengths up to 16:0, being most active on intermediate chain length. This chain is 3-hydroxydecanoyl-[acyl-carrier-protein] dehydratase, found in Rhodopseudomonas palustris (strain ATCC BAA-98 / CGA009).